A 369-amino-acid polypeptide reads, in one-letter code: Phospho-N-acetylmuramoyl-pentapeptide-transferase (369 aa).

The next 10 helical transmembrane spans lie at 2 to 22, 55 to 75, 86 to 106, 120 to 140, 163 to 183, 196 to 216, 239 to 259, 266 to 286, 291 to 311, and 348 to 368; these read IALL…TPLF, TVVV…MWMM, GLLL…DDFI, AKLI…LQFP, LAFG…NLII, LDGL…IMGI, PMDL…FLWW, IFMG…FAIL, LLLA…IIQV, and ILAG…WVVL.

The protein belongs to the glycosyltransferase 4 family. MraY subfamily. It depends on Mg(2+) as a cofactor.

The protein localises to the cell membrane. It catalyses the reaction UDP-N-acetyl-alpha-D-muramoyl-L-alanyl-gamma-D-glutamyl-meso-2,6-diaminopimeloyl-D-alanyl-D-alanine + di-trans,octa-cis-undecaprenyl phosphate = di-trans,octa-cis-undecaprenyl diphospho-N-acetyl-alpha-D-muramoyl-L-alanyl-D-glutamyl-meso-2,6-diaminopimeloyl-D-alanyl-D-alanine + UMP. It participates in cell wall biogenesis; peptidoglycan biosynthesis. Its function is as follows. Catalyzes the initial step of the lipid cycle reactions in the biosynthesis of the cell wall peptidoglycan: transfers peptidoglycan precursor phospho-MurNAc-pentapeptide from UDP-MurNAc-pentapeptide onto the lipid carrier undecaprenyl phosphate, yielding undecaprenyl-pyrophosphoryl-MurNAc-pentapeptide, known as lipid I. This is Phospho-N-acetylmuramoyl-pentapeptide-transferase from Paenarthrobacter aurescens (strain TC1).